The chain runs to 740 residues: Putative Pol polyprotein from transposon element Bs1 (740 aa).

A PPR repeat occupies 469–503 (TAVAHNLLVQALFMDGRASDAYVVLEEMQNNGPFP).

Its function is as follows. Bs1 is probably an active plant retrotransposon. The chain is Putative Pol polyprotein from transposon element Bs1 from Zea mays (Maize).